Consider the following 328-residue polypeptide: Ribosomal RNA small subunit methyltransferase H (328 aa).

S-adenosyl-L-methionine is bound by residues 35–37 (GSH), aspartate 60, phenylalanine 87, aspartate 113, and glutamine 120.

It belongs to the methyltransferase superfamily. RsmH family.

It is found in the cytoplasm. The enzyme catalyses cytidine(1402) in 16S rRNA + S-adenosyl-L-methionine = N(4)-methylcytidine(1402) in 16S rRNA + S-adenosyl-L-homocysteine + H(+). Specifically methylates the N4 position of cytidine in position 1402 (C1402) of 16S rRNA. The polypeptide is Ribosomal RNA small subunit methyltransferase H (Chlorobium chlorochromatii (strain CaD3)).